Here is a 205-residue protein sequence, read N- to C-terminus: Ribonuclease HII (205 aa).

The RNase H type-2 domain occupies V16–F205. A divalent metal cation contacts are provided by D22, E23, and D118.

It belongs to the RNase HII family. The cofactor is Mn(2+). Mg(2+) is required as a cofactor.

It localises to the cytoplasm. It carries out the reaction Endonucleolytic cleavage to 5'-phosphomonoester.. Functionally, endonuclease that specifically degrades the RNA of RNA-DNA hybrids. The sequence is that of Ribonuclease HII from Prochlorococcus marinus (strain MIT 9215).